Here is a 131-residue protein sequence, read N- to C-terminus: Small ribosomal subunit protein uS8 (131 aa).

This sequence belongs to the universal ribosomal protein uS8 family. In terms of assembly, part of the 30S ribosomal subunit. Contacts proteins S5 and S12.

Its function is as follows. One of the primary rRNA binding proteins, it binds directly to 16S rRNA central domain where it helps coordinate assembly of the platform of the 30S subunit. This Albidiferax ferrireducens (strain ATCC BAA-621 / DSM 15236 / T118) (Rhodoferax ferrireducens) protein is Small ribosomal subunit protein uS8.